The primary structure comprises 366 residues: MTPEHLPTEQYEAQLAEKVARLQSMMAPFSDLVPEVFRSPVSHYRMRAEFRLWHDGDDLYHIMFDQQTKSRIRVDTFPAASQLINTLMKAMIAGVRDNHALRHKLFQMDYLTTLSNQAVVSLLYHKKLDEEWREAATALRDALRAQGLNVHLIGRATKTKIELDQDYIDERLPVAGKEMIYRQVENSFTQPNAAMNIQMLEWALEVTKDSKGDLLELYCGNGNFSLALARNFNRVLATEIAKPSVAAAQYNIAANHIDNVQIIRMAAEEFTLAMNGVREFNRLQGIDLKGYQCETIFVDPPRSGLDSETEKMVQAYPRILYISCNPETLCKNLETLSQTHTVSRLALFDQFPYTHHMECGVLLTAR.

Residues Q190, Y218, N223, E239, and D299 each contribute to the S-adenosyl-L-methionine site. Catalysis depends on C324, which acts as the Nucleophile. E358 functions as the Proton acceptor in the catalytic mechanism.

Belongs to the class I-like SAM-binding methyltransferase superfamily. RNA M5U methyltransferase family. TrmA subfamily.

The catalysed reaction is uridine(54) in tRNA + S-adenosyl-L-methionine = 5-methyluridine(54) in tRNA + S-adenosyl-L-homocysteine + H(+). The enzyme catalyses uridine(341) in tmRNA + S-adenosyl-L-methionine = 5-methyluridine(341) in tmRNA + S-adenosyl-L-homocysteine + H(+). Dual-specificity methyltransferase that catalyzes the formation of 5-methyluridine at position 54 (m5U54) in all tRNAs, and that of position 341 (m5U341) in tmRNA (transfer-mRNA). This chain is tRNA/tmRNA (uracil-C(5))-methyltransferase, found in Salmonella newport (strain SL254).